We begin with the raw amino-acid sequence, 461 residues long: tRNA modification GTPase MnmE (461 aa).

Residues lysine 32, glutamate 89, and lysine 128 each coordinate (6S)-5-formyl-5,6,7,8-tetrahydrofolate. Residues 224-387 enclose the TrmE-type G domain; the sequence is GHALSIVGKP…LSQKISAFFP (164 aa). Asparagine 234 contributes to the K(+) binding site. Residues 234–239, 253–259, and 278–281 contribute to the GTP site; these read NAGKSS, SDIKGTT, and DTAG. Position 238 (serine 238) interacts with Mg(2+). K(+) contacts are provided by serine 253, isoleucine 255, and threonine 258. Threonine 259 provides a ligand contact to Mg(2+). Lysine 461 lines the (6S)-5-formyl-5,6,7,8-tetrahydrofolate pocket.

It belongs to the TRAFAC class TrmE-Era-EngA-EngB-Septin-like GTPase superfamily. TrmE GTPase family. As to quaternary structure, homodimer. Heterotetramer of two MnmE and two MnmG subunits. It depends on K(+) as a cofactor.

Its subcellular location is the cytoplasm. Its function is as follows. Exhibits a very high intrinsic GTPase hydrolysis rate. Involved in the addition of a carboxymethylaminomethyl (cmnm) group at the wobble position (U34) of certain tRNAs, forming tRNA-cmnm(5)s(2)U34. This is tRNA modification GTPase MnmE from Helicobacter pylori (strain ATCC 700392 / 26695) (Campylobacter pylori).